We begin with the raw amino-acid sequence, 356 residues long: MTRLTLALDVMGGDFGPSVTVPAALQALNSNSQLTLLLVGNPDAITPLLAKADFEQRSRLQIIPAQSVIASDARPSQAIRASRGSSMRVALELVKEGRAQACVSAGNTGALMGLAKLLLKPLEGIERPALVTVLPHQQKGKTVVLDLGANVDCDSTMLVQFAIMGSVLAEEVVEIPNPRVALLNIGEEEVKGLDSIRDASAVLKTIPSINYIGYLEANELLTGKTDVLVCDGFTGNVTLKTMEGVVRMFLSLLKSQGEGKKRSWWLLLLKRWLQKSLTRRFSHLNPDQYNGACLLGLRGTVIKSHGAANQRAFAVAIEQAVQAVQRQVPQRIAARLESVYPAGFELLDGGKSGTLR.

The protein belongs to the PlsX family. Homodimer. Probably interacts with PlsY.

Its subcellular location is the cytoplasm. The catalysed reaction is a fatty acyl-[ACP] + phosphate = an acyl phosphate + holo-[ACP]. It participates in lipid metabolism; phospholipid metabolism. Catalyzes the reversible formation of acyl-phosphate (acyl-PO(4)) from acyl-[acyl-carrier-protein] (acyl-ACP). This enzyme utilizes acyl-ACP as fatty acyl donor, but not acyl-CoA. This Shigella sonnei (strain Ss046) protein is Phosphate acyltransferase.